The sequence spans 724 residues: MAAMADKVVVKKTTTRRRGRSNSRSRSRSRSRSRTKKTVKIIEKKPEKSILKKIDQAERRDAKQLRRIRKKVQGPPVNSRMTTVVTLGQITGNKDNTLERKHKCFLNPLLMKSQETGQTATPLSVRASQYNLWKLSRLHVRLIPLAGKANILGSVVFLDLEQEANTAGPESVDTIKARPHVEVPIGSKTVWKVHPRSALGPRQGWWNVDPGDSPTDSLGPALNMWTYLQTVNALQSAGGTQTPYTSALFLVEVLVTYEFSNYGPKPALSQMVSDSFPPASGSTATLKNTSDGAVAIQLSGAIARKMEEVEPKGRRSNAQTSGVGEVFWAVSTEVVNTVADAIPGWGWLLKGGWFVLRKIFGAANDQNGTYLIYSSVADAQGDNRIYTSVKQTQLTSSRINLVQLTQPNVNQAAVGGSVGAANSIYLPLPQADDQYTPYFVYNFQGERVSTTETGVFCLAAIPAATTSSRYNNQITTPSIGYRNASGTGTSFLLDAASWWNILDVTQTGVLFGQPRLGVGVMQTMKTLKQHIKDYTEPAIQKYYPGTTNLDEQLKQRLNLAEGDPVISMGDTNGRRAALFYRTSDEKYILFFSTTEDPGAQYQNLKMLYFWNWSYSDTKQQFLDHLRTVQFANLDDSQPAPYDSDDDDLSDVTSLFEQADLGDETDFKFNMSIQTSKHLEEEKNYWKNQCERMMMEKALSGTSQPLVRFEKAGPRADQSSASGHS.

The interval 1-39 (MAAMADKVVVKKTTTRRRGRSNSRSRSRSRSRSRTKKTV) is disordered. Residues 13-39 (TTTRRRGRSNSRSRSRSRSRSRTKKTV) are compositionally biased toward basic residues. The tract at residues 423-629 (SIYLPLPQAD…QFLDHLRTVQ (207 aa)) is P2 globular domain. An acidic region spans residues 630–724 (FANLDDSQPA…ADQSSASGHS (95 aa)). A disordered region spans residues 700 to 724 (GTSQPLVRFEKAGPRADQSSASGHS).

Belongs to the astroviridae capsid polyprotein family. Specific enzymatic cleavages by the host yield mature proteins.

The protein resides in the virion. Functionally, self-assembles to form an icosahedral T=3 immature capsid. This chain is Capsid polyprotein VP90, found in Turkey astrovirus 2 (TAstV-2).